Here is a 349-residue protein sequence, read N- to C-terminus: sn-glycerol-3-phosphate import ATP-binding protein UgpC (349 aa).

Residues 4 to 235 enclose the ABC transporter domain; it reads VTLTAVRKVY…PASTFVASFM (232 aa). 37–44 contacts ATP; that stretch reads GPSGCGKS.

This sequence belongs to the ABC transporter superfamily. sn-glycerol-3-phosphate importer (TC 3.A.1.1.3) family. In terms of assembly, the complex is composed of two ATP-binding proteins (UgpC), two transmembrane proteins (UgpA and UgpE) and a solute-binding protein (UgpB).

The protein resides in the cell inner membrane. The catalysed reaction is sn-glycerol 3-phosphate(out) + ATP + H2O = sn-glycerol 3-phosphate(in) + ADP + phosphate + H(+). Its function is as follows. Part of the ABC transporter complex UgpBAEC involved in sn-glycerol-3-phosphate (G3P) import. Responsible for energy coupling to the transport system. The chain is sn-glycerol-3-phosphate import ATP-binding protein UgpC from Jannaschia sp. (strain CCS1).